Reading from the N-terminus, the 131-residue chain is Insulin-like 3 (131 aa).

The N-terminal stretch at 1–26 (MDPHPLTWALVLLGPALALSRAPAPA) is a signal peptide. Cystine bridges form between cysteine 34-cysteine 116, cysteine 46-cysteine 129, and cysteine 115-cysteine 120. Residues 58–103 (AVAGGDRELLQWLEGQHLFHGLMASGDPMLVLAPQPPPQASGHHHH) constitute a propeptide, c peptide like.

This sequence belongs to the insulin family. In terms of assembly, heterodimer of a B chain and an A chain linked by two disulfide bonds. Expressed exclusively in prenatal and postnatal Leydig cells.

The protein resides in the secreted. Its function is as follows. Seems to play a role in testicular function. May be a trophic hormone with a role in testicular descent in fetal life. Is a ligand for LGR8 receptor. This is Insulin-like 3 (INSL3) from Sus scrofa (Pig).